Reading from the N-terminus, the 221-residue chain is Uridylate kinase (221 aa).

7 to 11 contributes to the ATP binding site; the sequence is KISGK. Residue G43 participates in UMP binding. ATP-binding residues include G44 and R48. Residues D62 and 109–115 each bind UMP; that span reads LQPGQST. ATP-binding residues include T135 and Y141.

This sequence belongs to the UMP kinase family. Homohexamer.

The protein resides in the cytoplasm. The enzyme catalyses UMP + ATP = UDP + ADP. Its pathway is pyrimidine metabolism; CTP biosynthesis via de novo pathway; UDP from UMP (UMPK route): step 1/1. Its activity is regulated as follows. Inhibited by UTP. Catalyzes the reversible phosphorylation of UMP to UDP. The chain is Uridylate kinase from Ignicoccus hospitalis (strain KIN4/I / DSM 18386 / JCM 14125).